A 159-amino-acid polypeptide reads, in one-letter code: Putative ribosomal RNA large subunit methyltransferase H (159 aa).

Residues L76, G108, and 127 to 132 (FSKMTF) each bind S-adenosyl-L-methionine.

This sequence belongs to the RNA methyltransferase RlmH family.

It localises to the cytoplasm. The catalysed reaction is pseudouridine(1915) in 23S rRNA + S-adenosyl-L-methionine = N(3)-methylpseudouridine(1915) in 23S rRNA + S-adenosyl-L-homocysteine + H(+). In terms of biological role, specifically methylates the pseudouridine at position 1915 (m3Psi1915) in 23S rRNA. The chain is Putative ribosomal RNA large subunit methyltransferase H from Methanococcus maripaludis (strain C7 / ATCC BAA-1331).